A 513-amino-acid polypeptide reads, in one-letter code: ATP synthase subunit alpha (513 aa).

169-176 (GDRQTGKT) serves as a coordination point for ATP.

Belongs to the ATPase alpha/beta chains family. F-type ATPases have 2 components, CF(1) - the catalytic core - and CF(0) - the membrane proton channel. CF(1) has five subunits: alpha(3), beta(3), gamma(1), delta(1), epsilon(1). CF(0) has three main subunits: a(1), b(2) and c(9-12). The alpha and beta chains form an alternating ring which encloses part of the gamma chain. CF(1) is attached to CF(0) by a central stalk formed by the gamma and epsilon chains, while a peripheral stalk is formed by the delta and b chains.

The protein localises to the cell inner membrane. It carries out the reaction ATP + H2O + 4 H(+)(in) = ADP + phosphate + 5 H(+)(out). In terms of biological role, produces ATP from ADP in the presence of a proton gradient across the membrane. The alpha chain is a regulatory subunit. In Bordetella avium (strain 197N), this protein is ATP synthase subunit alpha.